The chain runs to 596 residues: Fructan 1-exohydrolase w2 (596 aa).

An N-terminal signal peptide occupies residues 1-20 (MAQAWAFLLPVLVLGSYVTS). Asp75 is an active-site residue. Residues Asn168, Asn236, and Asn248 are each glycosylated (N-linked (GlcNAc...) asparagine). An intrachain disulfide couples Cys446 to Cys492. Asn567 is a glycosylation site (N-linked (GlcNAc...) asparagine).

This sequence belongs to the glycosyl hydrolase 32 family.

It carries out the reaction Hydrolysis of terminal, non-reducing (2-&gt;1)-linked beta-D-fructofuranose residues in fructans.. With respect to regulation, inhibited by sucrose. Its function is as follows. Hydrolyzes inulin-type beta-(2,1)-fructans, but not beta-(2,1)-linkages in branched fructans. Has low activity against beta-(2,6)-linked fructans. May play a role as a beta-(2,1)-trimmer during graminan biosynthesis. This chain is Fructan 1-exohydrolase w2, found in Triticum aestivum (Wheat).